Consider the following 125-residue polypeptide: Small ribosomal subunit protein uS13 (125 aa).

The tract at residues Gly-95 to Lys-125 is disordered. The segment covering Thr-105–Lys-125 has biased composition (basic residues).

The protein belongs to the universal ribosomal protein uS13 family. Part of the 30S ribosomal subunit. Forms a loose heterodimer with protein S19. Forms two bridges to the 50S subunit in the 70S ribosome.

Located at the top of the head of the 30S subunit, it contacts several helices of the 16S rRNA. In the 70S ribosome it contacts the 23S rRNA (bridge B1a) and protein L5 of the 50S subunit (bridge B1b), connecting the 2 subunits; these bridges are implicated in subunit movement. Contacts the tRNAs in the A and P-sites. The sequence is that of Small ribosomal subunit protein uS13 from Leptospira biflexa serovar Patoc (strain Patoc 1 / Ames).